Consider the following 139-residue polypeptide: MEYNYFELLERAYQKLKDVIKQEQIRWNPPIPHIEYVKNRTIITNFKQIANYLNRDPKIIAKFFSKELFVQTIIEGNSLIINKRVSYETIKKKLDEFINIFVICPVCKRPDTELIERGRKIYYIKCHACGSESPVNYEL.

Belongs to the eIF-2-beta/eIF-5 family. In terms of assembly, heterotrimer composed of an alpha, a beta and a gamma chain.

In terms of biological role, eIF-2 functions in the early steps of protein synthesis by forming a ternary complex with GTP and initiator tRNA. The polypeptide is Translation initiation factor 2 subunit beta (Nanoarchaeum equitans (strain Kin4-M)).